The primary structure comprises 906 residues: Protein translocase subunit SecA (906 aa).

Residues glutamine 89, 107–111, and aspartate 502 contribute to the ATP site; that span reads GEGKT. Residues 868-887 form a disordered region; that stretch reads VPPAQRDPADPRTWGKVSRN. The Zn(2+) site is built by cysteine 890, cysteine 892, cysteine 901, and histidine 902.

The protein belongs to the SecA family. In terms of assembly, monomer and homodimer. Part of the essential Sec protein translocation apparatus which comprises SecA, SecYEG and auxiliary proteins SecDF-YajC and YidC. It depends on Zn(2+) as a cofactor.

Its subcellular location is the cell inner membrane. The protein localises to the cytoplasm. The enzyme catalyses ATP + H2O + cellular proteinSide 1 = ADP + phosphate + cellular proteinSide 2.. Its function is as follows. Part of the Sec protein translocase complex. Interacts with the SecYEG preprotein conducting channel. Has a central role in coupling the hydrolysis of ATP to the transfer of proteins into and across the cell membrane, serving both as a receptor for the preprotein-SecB complex and as an ATP-driven molecular motor driving the stepwise translocation of polypeptide chains across the membrane. This chain is Protein translocase subunit SecA, found in Brucella abortus (strain S19).